We begin with the raw amino-acid sequence, 224 residues long: Ras-related protein RABA4b (224 aa).

Residue alanine 2 is modified to N-acetylalanine. A GTP-binding site is contributed by 24–31 (GDSAVGKS). The Effector region motif lies at 46 to 54 (SKATIGVEF). Residues 72-76 (DTAGQ), 130-133 (NKSD), and 160-161 (SA) each bind GTP. S-geranylgeranyl cysteine attachment occurs at residues cysteine 220 and cysteine 221.

The protein belongs to the small GTPase superfamily. Rab family. As to quaternary structure, interacts with TCTP1. As to expression, expressed in roots, stems, leaves and flowers. Expressed in tips of growing root hair cells.

It is found in the early endosome membrane. The protein resides in the golgi apparatus. It localises to the trans-Golgi network membrane. Its function is as follows. Regulator of membrane trafficking. May be required for secretion of cell wall components in cells. The protein is Ras-related protein RABA4b of Arabidopsis thaliana (Mouse-ear cress).